A 173-amino-acid chain; its full sequence is Crossover junction endodeoxyribonuclease RuvC (173 aa).

Active-site residues include Asp-8, Glu-67, and Asp-139. 3 residues coordinate Mg(2+): Asp-8, Glu-67, and Asp-139.

The protein belongs to the RuvC family. Homodimer which binds Holliday junction (HJ) DNA. The HJ becomes 2-fold symmetrical on binding to RuvC with unstacked arms; it has a different conformation from HJ DNA in complex with RuvA. In the full resolvosome a probable DNA-RuvA(4)-RuvB(12)-RuvC(2) complex forms which resolves the HJ. Mg(2+) is required as a cofactor.

It is found in the cytoplasm. The catalysed reaction is Endonucleolytic cleavage at a junction such as a reciprocal single-stranded crossover between two homologous DNA duplexes (Holliday junction).. In terms of biological role, the RuvA-RuvB-RuvC complex processes Holliday junction (HJ) DNA during genetic recombination and DNA repair. Endonuclease that resolves HJ intermediates. Cleaves cruciform DNA by making single-stranded nicks across the HJ at symmetrical positions within the homologous arms, yielding a 5'-phosphate and a 3'-hydroxyl group; requires a central core of homology in the junction. The consensus cleavage sequence is 5'-(A/T)TT(C/G)-3'. Cleavage occurs on the 3'-side of the TT dinucleotide at the point of strand exchange. HJ branch migration catalyzed by RuvA-RuvB allows RuvC to scan DNA until it finds its consensus sequence, where it cleaves and resolves the cruciform DNA. In Edwardsiella ictaluri (strain 93-146), this protein is Crossover junction endodeoxyribonuclease RuvC.